Reading from the N-terminus, the 464-residue chain is NADH-ubiquinone oxidoreductase chain 4 (464 aa).

The next 13 helical transmembrane spans lie at 1 to 21 (MMITLILFTTGIVMTTLVIPQ), 63 to 83 (SISAPLIALSCWLAPISLIAS), 98 to 118 (FIIIVIFIAGALIITFSALEL), 119 to 139 (LLFYVAFETTLIPTLILITRW), 152 to 172 (FMFYTLFGSLPLLISLIAIYI), 197 to 217 (IWWALSIIAFLIKMPIYGFHL), 227 to 247 (PVAGSMILAAILLKLGGYGLI), 261 to 281 (LSLALITFCSWGALVTSIICV), 288 to 308 (ALIAYSSVGHMSIVAAAIFSS), 314 to 334 (NGALILMIAYGLVSSDLFSLA), 355 to 375 (ILPLSTLWWLVMSAANLGLPP), 389 to 409 (LIAWSIWLFPIIGLATIFGAI), and 443 to 463 (LHTLPLILIIINPISALITWL).

It belongs to the complex I subunit 4 family.

Its subcellular location is the mitochondrion membrane. The catalysed reaction is a ubiquinone + NADH + 5 H(+)(in) = a ubiquinol + NAD(+) + 4 H(+)(out). Core subunit of the mitochondrial membrane respiratory chain NADH dehydrogenase (Complex I) that is believed to belong to the minimal assembly required for catalysis. Complex I functions in the transfer of electrons from NADH to the respiratory chain. The immediate electron acceptor for the enzyme is believed to be ubiquinone. This is NADH-ubiquinone oxidoreductase chain 4 (ND4) from Paracentrotus lividus (Common sea urchin).